The primary structure comprises 329 residues: GTP 3',8-cyclase (329 aa).

Positions 8–234 (AFARKFYYLR…QIRQRSDGPA (227 aa)) constitute a Radical SAM core domain. Arg-17 contacts GTP. The [4Fe-4S] cluster site is built by Cys-24 and Cys-28. Tyr-30 serves as a coordination point for S-adenosyl-L-methionine. A [4Fe-4S] cluster-binding site is contributed by Cys-31. Arg-68 is a binding site for GTP. Gly-72 lines the S-adenosyl-L-methionine pocket. Thr-99 is a GTP binding site. Ser-123 lines the S-adenosyl-L-methionine pocket. Lys-160 provides a ligand contact to GTP. Residue Met-194 coordinates S-adenosyl-L-methionine. Residues Cys-257 and Cys-260 each coordinate [4Fe-4S] cluster. A GTP-binding site is contributed by 262–264 (RLR). Cys-274 provides a ligand contact to [4Fe-4S] cluster.

Belongs to the radical SAM superfamily. MoaA family. As to quaternary structure, monomer and homodimer. It depends on [4Fe-4S] cluster as a cofactor.

The enzyme catalyses GTP + AH2 + S-adenosyl-L-methionine = (8S)-3',8-cyclo-7,8-dihydroguanosine 5'-triphosphate + 5'-deoxyadenosine + L-methionine + A + H(+). Its pathway is cofactor biosynthesis; molybdopterin biosynthesis. Catalyzes the cyclization of GTP to (8S)-3',8-cyclo-7,8-dihydroguanosine 5'-triphosphate. This Klebsiella pneumoniae subsp. pneumoniae (strain ATCC 700721 / MGH 78578) protein is GTP 3',8-cyclase.